The following is a 512-amino-acid chain: UDP-N-acetylglucosamine--peptide N-acetylglucosaminyltransferase GtfA subunit (512 aa).

A UDP-binding site is contributed by 16–19 (GVEY). An N-acetyl-D-glucosamine-binding site is contributed by histidine 251. UDP is bound by residues 393 to 394 (QH) and 413 to 416 (EGFG).

This sequence belongs to the glycosyltransferase group 1 family. Glycosyltransferase 4 subfamily. In terms of assembly, forms a heterotetramer with 2 subunits each of GtfA and GtfB. Part of the accessory SecA2/SecY2 protein translocation apparatus.

The protein localises to the cytoplasm. It localises to the cell membrane. The catalysed reaction is L-seryl-[protein] + UDP-N-acetyl-alpha-D-glucosamine = 3-O-[N-acetyl-alpha-D-glucosaminyl]-L-seryl-[protein] + UDP + H(+). Its pathway is protein modification; protein glycosylation. In terms of biological role, required for polymorphic O-glycosylation of the serine-rich repeat protein (SRRP) in this bacteria. Catalyzes the first step in glycosylation by transferring N-acetylglucosamine from UDP-GlcNAc to serine residues in the substrate protein. Part of the accessory SecA2/SecY2 system specifically required to export serine-rich repeat cell wall proteins encoded in the same operon. The GtfA-GtfB complex adds GlcNAc from UDP-GlcNAc to SRRP (experimentally characterized with a truncated SSR1 construct); the alpha linkage was shown for this enzyme but not the residues glycosylated on SRRP. The chain is UDP-N-acetylglucosamine--peptide N-acetylglucosaminyltransferase GtfA subunit from Limosilactobacillus reuteri subsp. suis (strain ATCC 53608 / LMG 31752 / 1063) (Lactobacillus reuteri).